A 143-amino-acid polypeptide reads, in one-letter code: Large ribosomal subunit protein uL11 (143 aa).

It belongs to the universal ribosomal protein uL11 family. As to quaternary structure, part of the ribosomal stalk of the 50S ribosomal subunit. Interacts with L10 and the large rRNA to form the base of the stalk. L10 forms an elongated spine to which L12 dimers bind in a sequential fashion forming a multimeric L10(L12)X complex. In terms of processing, one or more lysine residues are methylated.

Forms part of the ribosomal stalk which helps the ribosome interact with GTP-bound translation factors. The protein is Large ribosomal subunit protein uL11 of Cutibacterium acnes (strain DSM 16379 / KPA171202) (Propionibacterium acnes).